Reading from the N-terminus, the 295-residue chain is Formamidopyrimidine-DNA glycosylase (295 aa).

Residue P2 is the Schiff-base intermediate with DNA of the active site. E3 acts as the Proton donor in catalysis. The active-site Proton donor; for beta-elimination activity is the K61. Positions 95, 117, and 159 each coordinate DNA. The FPG-type zinc-finger motif lies at 245 to 279 (HAYGREGEACERCGTPIRRVAFMNRSSYFCPVCQP). R269 acts as the Proton donor; for delta-elimination activity in catalysis.

It belongs to the FPG family. In terms of assembly, monomer. It depends on Zn(2+) as a cofactor.

The enzyme catalyses Hydrolysis of DNA containing ring-opened 7-methylguanine residues, releasing 2,6-diamino-4-hydroxy-5-(N-methyl)formamidopyrimidine.. It carries out the reaction 2'-deoxyribonucleotide-(2'-deoxyribose 5'-phosphate)-2'-deoxyribonucleotide-DNA = a 3'-end 2'-deoxyribonucleotide-(2,3-dehydro-2,3-deoxyribose 5'-phosphate)-DNA + a 5'-end 5'-phospho-2'-deoxyribonucleoside-DNA + H(+). Its function is as follows. Involved in base excision repair of DNA damaged by oxidation or by mutagenic agents. Acts as a DNA glycosylase that recognizes and removes damaged bases. Has a preference for oxidized purines, such as 7,8-dihydro-8-oxoguanine (8-oxoG). Has AP (apurinic/apyrimidinic) lyase activity and introduces nicks in the DNA strand. Cleaves the DNA backbone by beta-delta elimination to generate a single-strand break at the site of the removed base with both 3'- and 5'-phosphates. This chain is Formamidopyrimidine-DNA glycosylase, found in Nocardioides sp. (strain ATCC BAA-499 / JS614).